The following is a 77-amino-acid chain: Large ribosomal subunit protein uL24c (77 aa).

Belongs to the universal ribosomal protein uL24 family. In terms of assembly, part of the 50S ribosomal subunit.

The protein localises to the plastid. It is found in the chloroplast. Functionally, one of two assembly initiator proteins, it binds directly to the 5'-end of the 23S rRNA, where it nucleates assembly of the 50S subunit. In Thalassiosira pseudonana (Marine diatom), this protein is Large ribosomal subunit protein uL24c (rpl24).